Consider the following 125-residue polypeptide: Transposase for transposon Tn554 (125 aa).

Its function is as follows. One of three proteins encoded by transposon Tn554 required for its transposition. This Staphylococcus aureus (strain Mu50 / ATCC 700699) protein is Transposase for transposon Tn554 (tnpC1).